A 129-amino-acid chain; its full sequence is Protein Turandot A1 (129 aa).

Residues 1 to 21 (MNSSTALMCFALLLISPLCMG) form the signal peptide. Asparagine 49 carries N-linked (GlcNAc...) asparagine glycosylation.

The protein belongs to the Turandot family.

The protein localises to the secreted. In terms of biological role, a humoral factor that plays a role in stress tolerance; gives increased resistance to the lethal effects of bacterial challenge and stress. Regulated by the JAK/STAT pathway and NF-KB-like Relish pathway in the fat body, upd3 in the hemocytes and Mekk1 in response to septic injury and consequent immune response. The protein is Protein Turandot A1 (TotA1) of Drosophila simulans (Fruit fly).